A 247-amino-acid chain; its full sequence is ATP synthase subunit a, chloroplastic (247 aa).

The next 5 helical transmembrane spans lie at 38–58 (QVLI…VIAV), 95–115 (VPFI…GALL), 134–154 (INTT…AGLS), 199–219 (LVVV…VMFL), and 220–240 (GLFT…AYIG).

This sequence belongs to the ATPase A chain family. As to quaternary structure, F-type ATPases have 2 components, CF(1) - the catalytic core - and CF(0) - the membrane proton channel. CF(1) has five subunits: alpha(3), beta(3), gamma(1), delta(1), epsilon(1). CF(0) has four main subunits: a, b, b' and c.

It localises to the plastid. The protein localises to the chloroplast thylakoid membrane. Its function is as follows. Key component of the proton channel; it plays a direct role in the translocation of protons across the membrane. This chain is ATP synthase subunit a, chloroplastic, found in Lolium perenne (Perennial ryegrass).